A 414-amino-acid polypeptide reads, in one-letter code: Serine hydroxymethyltransferase (414 aa).

(6S)-5,6,7,8-tetrahydrofolate-binding positions include L116 and 120–122; that span reads GHL. K224 bears the N6-(pyridoxal phosphate)lysine mark. Residues E240 and 348 to 350 each bind (6S)-5,6,7,8-tetrahydrofolate; that span reads SPF.

It belongs to the SHMT family. As to quaternary structure, homodimer. Pyridoxal 5'-phosphate serves as cofactor.

The protein localises to the cytoplasm. It catalyses the reaction (6R)-5,10-methylene-5,6,7,8-tetrahydrofolate + glycine + H2O = (6S)-5,6,7,8-tetrahydrofolate + L-serine. Its pathway is one-carbon metabolism; tetrahydrofolate interconversion. It functions in the pathway amino-acid biosynthesis; glycine biosynthesis; glycine from L-serine: step 1/1. In terms of biological role, catalyzes the reversible interconversion of serine and glycine with tetrahydrofolate (THF) serving as the one-carbon carrier. This reaction serves as the major source of one-carbon groups required for the biosynthesis of purines, thymidylate, methionine, and other important biomolecules. Also exhibits THF-independent aldolase activity toward beta-hydroxyamino acids, producing glycine and aldehydes, via a retro-aldol mechanism. In Campylobacter jejuni subsp. jejuni serotype O:2 (strain ATCC 700819 / NCTC 11168), this protein is Serine hydroxymethyltransferase.